A 306-amino-acid chain; its full sequence is Methionyl-tRNA formyltransferase (306 aa).

109–112 is a (6S)-5,6,7,8-tetrahydrofolate binding site; the sequence is SILP.

The protein belongs to the Fmt family.

It catalyses the reaction L-methionyl-tRNA(fMet) + (6R)-10-formyltetrahydrofolate = N-formyl-L-methionyl-tRNA(fMet) + (6S)-5,6,7,8-tetrahydrofolate + H(+). In terms of biological role, attaches a formyl group to the free amino group of methionyl-tRNA(fMet). The formyl group appears to play a dual role in the initiator identity of N-formylmethionyl-tRNA by promoting its recognition by IF2 and preventing the misappropriation of this tRNA by the elongation apparatus. This Herpetosiphon aurantiacus (strain ATCC 23779 / DSM 785 / 114-95) protein is Methionyl-tRNA formyltransferase.